The sequence spans 467 residues: UDP-N-acetylmuramate--L-alanine ligase (467 aa).

112 to 118 (GTHGKTT) is an ATP binding site.

This sequence belongs to the MurCDEF family.

It localises to the cytoplasm. It catalyses the reaction UDP-N-acetyl-alpha-D-muramate + L-alanine + ATP = UDP-N-acetyl-alpha-D-muramoyl-L-alanine + ADP + phosphate + H(+). The protein operates within cell wall biogenesis; peptidoglycan biosynthesis. Functionally, cell wall formation. This chain is UDP-N-acetylmuramate--L-alanine ligase, found in Paraburkholderia phytofirmans (strain DSM 17436 / LMG 22146 / PsJN) (Burkholderia phytofirmans).